We begin with the raw amino-acid sequence, 584 residues long: uncharacterized protein (584 aa).

The span at asparagine 353–alanine 375 shows a compositional bias: polar residues. Disordered regions lie at residues asparagine 353 to glutamate 379, leucine 400 to histidine 426, and serine 463 to glycine 565. Residues lysine 502–leucine 511 show a composition bias toward polar residues. Over residues aspartate 516–alanine 535 the composition is skewed to basic and acidic residues.

This is an uncharacterized protein from Mus musculus (Mouse).